Consider the following 103-residue polypeptide: Small ribosomal subunit protein uS10 (103 aa).

This sequence belongs to the universal ribosomal protein uS10 family. In terms of assembly, part of the 30S ribosomal subunit.

Functionally, involved in the binding of tRNA to the ribosomes. In Pseudoalteromonas atlantica (strain T6c / ATCC BAA-1087), this protein is Small ribosomal subunit protein uS10.